The primary structure comprises 138 residues: Large ribosomal subunit protein uL16 (138 aa).

Residues 1 to 15 show a composition bias toward basic residues; the sequence is MLSPKKVKYRKKQRG. The disordered stretch occupies residues 1–21; sequence MLSPKKVKYRKKQRGRLSGEA.

Belongs to the universal ribosomal protein uL16 family. As to quaternary structure, part of the 50S ribosomal subunit.

Its function is as follows. Binds 23S rRNA and is also seen to make contacts with the A and possibly P site tRNAs. This is Large ribosomal subunit protein uL16 from Borreliella afzelii (strain PKo) (Borrelia afzelii).